Here is a 637-residue protein sequence, read N- to C-terminus: Poly(U)-binding-splicing factor hfp (637 aa).

2 stretches are compositionally biased toward basic and acidic residues: residues 1–20 (MGSN…REIS) and 28–37 (TRSDSGKSTD). Positions 1-41 (MGSNDRASRSPRSDDQREISDMPATKRTRSDSGKSTDSKIP) are disordered. A phosphoserine mark is found at Ser13 and Ser30. RRM domains lie at 130–208 (CRVY…RPSN) and 227–305 (NRIY…RSIT). One can recognise an RRM 3; atypical domain in the interval 537-627 (RVIILRNMVG…RRVVAELYDQ (91 aa)).

This sequence belongs to the RRM half pint family. As to quaternary structure, interacts with enc. However, given the cytoplasmic localization of enc, the relevance of such interaction is unclear. In terms of tissue distribution, expressed in all germline cells and within the follicle cell.

It localises to the nucleus. Functionally, splicing factor that regulates oogenesis and controls both mitosis and mRNA localization in the germline by regulating mRNA splicing of a subset of genes within the ovary. Probably acts by regulating the alternative splice site selection of the otu transcript. Also regulates the alternative splicing of eIF4E1 and grk, while it is not involved in the splicing of par-1, sqd or psq. Involved in the alternative splicing of the bicistronic pre-mRNA encoding Kdm3 and CG8176; required for the efficient production of mRNA encoding Kdm3 and Kdm3-mediated regulation of rhino-dependent piRNA production. This Drosophila melanogaster (Fruit fly) protein is Poly(U)-binding-splicing factor hfp.